The chain runs to 370 residues: Cobalt-precorrin-5B C(1)-methyltransferase (370 aa).

This sequence belongs to the CbiD family.

It carries out the reaction Co-precorrin-5B + S-adenosyl-L-methionine = Co-precorrin-6A + S-adenosyl-L-homocysteine. It participates in cofactor biosynthesis; adenosylcobalamin biosynthesis; cob(II)yrinate a,c-diamide from sirohydrochlorin (anaerobic route): step 6/10. In terms of biological role, catalyzes the methylation of C-1 in cobalt-precorrin-5B to form cobalt-precorrin-6A. This chain is Cobalt-precorrin-5B C(1)-methyltransferase, found in Prochlorococcus marinus (strain MIT 9312).